Consider the following 882-residue polypeptide: MPEIAQAHTPMMRQYLETKARYPDAILFFRLGDFYEMFFEDALTASEALQITLTARSKGDDKVPMCGVPYHAARGYVARLLEKGFKVAICDQVEEPGKSQLVKREVTRVVTPGMVLDDQVLDPREASWLGAVALEGGRAGLALLDASTGQLQCGEVDGDERLVDELRRAGVRELVFSSAADGARTEAIARAVGAPAARRDAAEFERAEDRLRKHLGVPSLDGFGVSGLPLGLSAAAAALAYLADTQRAAPRHVDRISRLSTDDVLLLDEATRTNLELERTLSGGRKKGTLLALLDRTVTAPGGRRLAEWLRYPLADLARIGARLDAVEELSGASVAREELAGALRPVADLERLLSRLVLGQGNARDLRALAGALLALPALADVLEARGAALLREAGGRLRGLEALAAHLDAAVAEEPPATLREGGFIRRGHSAELDEIVAISEDGKGWIAGLEAKERERTGIGSLKVRFNKVFGYYLEVTKPNLHLVPKDWERRQTTVGGERFVTPELKGFEEKVLTAEERRAALEERLFEALRQAVAAEAPRVRTAADAVATADALLSLARVAAERGYVRPEVDASEALEIVDGRHPVVEAVLPDGPAAYVPNDVLVASRGAPECAEHGALLVITGPNMAGKSTVMRQAALVVLLAQMGAFVPARRARIGLVDRIFTRVGASDDLARGRSTFMVEMTETAAILHNATRRSLVVLDEIGRGTSTFDGVSIAWAVAEHLHDVTGCRTLFATHYHELQDLARERPAVRNLTVAVREVGDRVVFLRKLVQGGASRSYGIEVAKLAGLPAEVLARAREILKNLEAMEVDEGGHPALARGRRRRAGPAAAQLGLFGGGAAADPAADEVAKAIRALDLDALRPLDALNLLAGWKRSLE.

627-634 contributes to the ATP binding site; that stretch reads GPNMAGKS.

It belongs to the DNA mismatch repair MutS family.

In terms of biological role, this protein is involved in the repair of mismatches in DNA. It is possible that it carries out the mismatch recognition step. This protein has a weak ATPase activity. The polypeptide is DNA mismatch repair protein MutS (Anaeromyxobacter dehalogenans (strain 2CP-C)).